The following is a 253-amino-acid chain: N-acetylmuramoyl-L-alanine amidase CwlM (253 aa).

One can recognise a MurNAc-LAA domain in the interval 4–172 (IFIDPGHGGS…IARGHANGLA (169 aa)). Positions 179–253 (KNAAALYKVQ…AEFDTFIYQE (75 aa)) constitute an SPOR domain. Repeat copies occupy residues 184–219 (LYKV…YRDS) and 220–253 (LYKV…IYQE). Positions 184-253 (LYKVQIAAFR…AEFDTFIYQE (70 aa)) are 2 X 35 AA approximate tandem repeats.

The protein belongs to the N-acetylmuramoyl-L-alanine amidase 3 family.

It is found in the secreted. The enzyme catalyses Hydrolyzes the link between N-acetylmuramoyl residues and L-amino acid residues in certain cell-wall glycopeptides.. Functionally, hydrolyzes the cell wall of M.luteus more efficiently than that of B.licheniformis and B.subtilis. The C-terminal region, including the repeats, determines substrate specificity. This is N-acetylmuramoyl-L-alanine amidase CwlM (cwlM) from Bacillus licheniformis.